A 176-amino-acid polypeptide reads, in one-letter code: Siroheme decarboxylase alpha subunit (176 aa).

Residues 1-24 (MTEAHNACCHPSGTAAGHHGAGKA) are disordered. The span at 12-24 (SGTAAGHHGAGKA) shows a compositional bias: low complexity.

The protein belongs to the Ahb/Nir family. Forms a heterodimer composed of AhbA and AhbB. Also forms heterotetramers.

It carries out the reaction siroheme + 2 H(+) = 12,18-didecarboxysiroheme + 2 CO2. It participates in porphyrin-containing compound metabolism; protoheme biosynthesis. Functionally, involved in siroheme-dependent heme b biosynthesis. Catalyzes the decarboxylation of siroheme into didecarboxysiroheme. The polypeptide is Siroheme decarboxylase alpha subunit (Nitratidesulfovibrio vulgaris (strain ATCC 29579 / DSM 644 / CCUG 34227 / NCIMB 8303 / VKM B-1760 / Hildenborough) (Desulfovibrio vulgaris)).